The sequence spans 132 residues: MIVRTTAEITDTERDITSEDGNWRSKRIILGGDKVGFSFHETTIKAGSVNEFHYANHVEAVWLVEGTGKLIDLDNDKVYELGPGSMYLLNGHERHRVEPETEMRMLCVFNPPVTGREVHDENGVYPLIEVPA.

The protein belongs to the ectoine synthase family.

The enzyme catalyses (2S)-4-acetamido-2-aminobutanoate = L-ectoine + H2O. It functions in the pathway amine and polyamine biosynthesis; ectoine biosynthesis; L-ectoine from L-aspartate 4-semialdehyde: step 3/3. Catalyzes the circularization of gamma-N-acetyl-alpha,gamma-diaminobutyric acid (ADABA) to ectoine (1,4,5,6-tetrahydro-2-methyl-4-pyrimidine carboxylic acid), which is an excellent osmoprotectant. The chain is L-ectoine synthase from Rhodococcus opacus (strain B4).